We begin with the raw amino-acid sequence, 294 residues long: 4-hydroxy-tetrahydrodipicolinate synthase (294 aa).

Thr-44 is a pyruvate binding site. Tyr-132 (proton donor/acceptor) is an active-site residue. Lys-160 (schiff-base intermediate with substrate) is an active-site residue. Ile-205 is a pyruvate binding site.

The protein belongs to the DapA family. In terms of assembly, homotetramer; dimer of dimers.

The protein localises to the cytoplasm. It carries out the reaction L-aspartate 4-semialdehyde + pyruvate = (2S,4S)-4-hydroxy-2,3,4,5-tetrahydrodipicolinate + H2O + H(+). The protein operates within amino-acid biosynthesis; L-lysine biosynthesis via DAP pathway; (S)-tetrahydrodipicolinate from L-aspartate: step 3/4. In terms of biological role, catalyzes the condensation of (S)-aspartate-beta-semialdehyde [(S)-ASA] and pyruvate to 4-hydroxy-tetrahydrodipicolinate (HTPA). The sequence is that of 4-hydroxy-tetrahydrodipicolinate synthase from Kosmotoga olearia (strain ATCC BAA-1733 / DSM 21960 / TBF 19.5.1).